A 111-amino-acid polypeptide reads, in one-letter code: Putative G antigen family E member 3 (111 aa).

Residues 1-67 form a disordered region; that stretch reads MSEHVRTRSQ…EGAPAVQGPD (67 aa). The segment covering 8 to 24 has biased composition (polar residues); the sequence is RSQSSERGNDQESSQPV. Position 97 is a phosphothreonine (Thr-97).

It belongs to the GAGE family.

In Homo sapiens (Human), this protein is Putative G antigen family E member 3 (PAGE2B).